The following is a 417-amino-acid chain: Histidinol-phosphate aminotransferase 1, chloroplastic (417 aa).

The transit peptide at 1–40 directs the protein to the chloroplast; it reads MGVINVQGSPSFSIHSSESNLRKSRALKKPFCSIRNRVYC. A41 carries the post-translational modification N-acetylalanine. K277 carries the post-translational modification N6-(pyridoxal phosphate)lysine.

It belongs to the class-II pyridoxal-phosphate-dependent aminotransferase family. Histidinol-phosphate aminotransferase subfamily. In terms of assembly, homodimer. Pyridoxal 5'-phosphate serves as cofactor. Expressed in both vegetative and reproductive tissues.

The protein localises to the plastid. The protein resides in the chloroplast. It carries out the reaction L-histidinol phosphate + 2-oxoglutarate = 3-(imidazol-4-yl)-2-oxopropyl phosphate + L-glutamate. It functions in the pathway amino-acid biosynthesis; L-histidine biosynthesis; L-histidine from 5-phospho-alpha-D-ribose 1-diphosphate: step 7/9. The sequence is that of Histidinol-phosphate aminotransferase 1, chloroplastic (HISN6A) from Arabidopsis thaliana (Mouse-ear cress).